A 681-amino-acid polypeptide reads, in one-letter code: MSNDVYFESIHMQSNYEEFETQAQERENISKISTSLSKFRKMSPKSTRSFKVKSAPLTNRKARNRIKSINAHVSAQYKVSNGQQNDDILDFFLKRKHNISSILEGVEDLENRNIVSNDTPQPSDNTGNYSSQLFTQEEWFQILRRIKLRFPKLSARTRKSLKYVTTKLEHLKNINSDDDSPQLWTQAASLPEEGLVNEDMKWLYELDDEQMDIGSSFCNVDEDSDQKLFVLTLSQAMGEREKSEPDVEIISDSSPEPTQLLNDGIIEEEHEVDEEEEDNENEEKSEKQLASSPTQISSDDTQEQLTNRAEISSYEASSLFPNTLETQKQPVKSTIQKQASVVVPDYPKISNVKDEEIILSSSPTRDNEIFQTPRKYSVESVRSSPSSRSGRLGRLMVSPLKLLSPDRLDASQSVYSTARSSPTKQKRVRGREVNEKIVRKRFKTSRVEVAGNFHLKASDDLKIVSTVDKVNGSEVEDSEDDDHSVSIIEITHEVNDEELKAVDEEVTGEAEDGPSIIQVPSSPGNENLQEDLTSMQTSIASVTQEVPSNYTATQMRQALRSLDFPPERSKEGMASSLTRAASIAGTSVSSLLTPDAPYEEVKNQIYSAISESVKKDQLWHERVLSYEPIVLEEFKQWLGELDKDLKFDVTFLQQYCDHMGITTTIGTTTGTTAGTNTTTTD.

Disordered stretches follow at residues 239–305 (EREK…QEQL) and 505–528 (EVTG…NENL). The segment covering 251 to 261 (SDSSPEPTQLL) has biased composition (polar residues). Residues 265–281 (IIEEEHEVDEEEEDNEN) show a composition bias toward acidic residues. Composition is skewed to polar residues over residues 288–305 (QLAS…QEQL) and 518–528 (QVPSSPGNENL).

The protein belongs to the SLX4 family. Forms a heterodimer with SLX1. Post-translationally, phosphorylated in response to DNA damage.

The protein localises to the nucleus. Its function is as follows. Regulatory subunit of the SLX1-SLX4 structure-specific endonuclease that resolves DNA secondary structures generated during DNA repair and recombination. Has endonuclease activity towards branched DNA substrates, introducing single-strand cuts in duplex DNA close to junctions with ss-DNA. The chain is Structure-specific endonuclease subunit SLX4 from Meyerozyma guilliermondii (strain ATCC 6260 / CBS 566 / DSM 6381 / JCM 1539 / NBRC 10279 / NRRL Y-324) (Yeast).